The following is a 509-amino-acid chain: uncharacterized protein (509 aa).

Disordered regions lie at residues 112 to 131 (KSKQNNNGFNGHKGNFSENE), 152 to 325 (NKNT…NNDS), 365 to 457 (NNIN…PNQG), and 488 to 509 (AQQPVSQQNNNVETNQDNVQQQ). 2 stretches are compositionally biased toward low complexity: residues 116–127 (NNNGFNGHKGNF) and 153–184 (KNTIITRKNNNNNNSNNNNNNNNNYNQKSNTT). The segment covering 189 to 217 (YSDDDYQNEQNEFEEEDYDSNDDENDSHD) has biased composition (acidic residues). Polar residues predominate over residues 228 to 242 (KTTNQLKRKVSSSFT). Low complexity-rich tracts occupy residues 243–325 (NNNY…NNDS) and 365–397 (NNINANNNNNNNNNNNNNNNLNDSTPNNQTNND). The span at 398 to 422 (LKSSNHSNYDFNYNTNERLSHSPIQ) shows a compositional bias: polar residues. Low complexity predominate over residues 423–442 (THSSSNNSTPSNQSPTFPSN). Polar residues-rich tracts occupy residues 443 to 457 (YISQNANINYNPNQG) and 496 to 509 (NNNVETNQDNVQQQ).

This is an uncharacterized protein from Dictyostelium discoideum (Social amoeba).